A 432-amino-acid polypeptide reads, in one-letter code: Protein trichome birefringence-like 23 (432 aa).

A helical; Signal-anchor for type II membrane protein transmembrane segment spans residues 13–35 (QNTYLIKLVAATLITCLAFRFFV). The short motif at 153 to 155 (GDS) is the GDS motif element. Residues 404–418 (DCLHWCLPGPIDHLN) carry the DCXHWCLPGXXDXWN motif motif.

This sequence belongs to the PC-esterase family. TBL subfamily.

It is found in the membrane. May act as a bridging protein that binds pectin and other cell wall polysaccharides. Probably involved in maintaining esterification of pectins. May be involved in the specific O-acetylation of cell wall polymers. The sequence is that of Protein trichome birefringence-like 23 (TBL23) from Arabidopsis thaliana (Mouse-ear cress).